A 473-amino-acid chain; its full sequence is Serine/threonine-protein phosphatase T (473 aa).

TPR repeat units follow at residues 5-38 (ALELKNEANKFLKEGHIVQAIDLYTKAIELDSTN), 40-72 (ILYSNRSLAHLKSEDYGLAINDASKAIECDPEY), and 73-106 (AKAYFRRATAHIAIFQPKEAVGDFRKALALAPSD). The segment at 159 to 472 (KQITKEFVED…MAYANGLLSG (314 aa)) is catalytic. Residues D217, H219, D246, and N278 each coordinate Mn(2+). The active-site Proton donor/acceptor is the H279. Mn(2+) is bound by residues H327 and H404.

This sequence belongs to the PPP phosphatase family. PP-5 (PP-T) subfamily. Mg(2+) is required as a cofactor. Mn(2+) serves as cofactor.

The protein localises to the nucleus. The catalysed reaction is O-phospho-L-seryl-[protein] + H2O = L-seryl-[protein] + phosphate. The enzyme catalyses O-phospho-L-threonyl-[protein] + H2O = L-threonyl-[protein] + phosphate. Its function is as follows. Protein phosphatase that specifically binds to and dephosphorylates the molecular chaperone Hsp90. Dephosphorylation positively regulates the Hsp90 chaperone machinery. In Schizosaccharomyces pombe (strain 972 / ATCC 24843) (Fission yeast), this protein is Serine/threonine-protein phosphatase T (ppt1).